The following is a 212-amino-acid chain: ATP-dependent dethiobiotin synthetase BioD (212 aa).

13–18 (GIGKTV) contacts ATP. Thr17 lines the Mg(2+) pocket. Lys33 is a catalytic residue. A substrate-binding site is contributed by Ser37. Mg(2+) is bound at residue Glu100. ATP-binding positions include 100-103 (EGAG) and 184-186 (PRL).

This sequence belongs to the dethiobiotin synthetase family. As to quaternary structure, homodimer. Requires Mg(2+) as cofactor.

It localises to the cytoplasm. It catalyses the reaction (7R,8S)-7,8-diammoniononanoate + CO2 + ATP = (4R,5S)-dethiobiotin + ADP + phosphate + 3 H(+). It functions in the pathway cofactor biosynthesis; biotin biosynthesis; biotin from 7,8-diaminononanoate: step 1/2. Functionally, catalyzes a mechanistically unusual reaction, the ATP-dependent insertion of CO2 between the N7 and N8 nitrogen atoms of 7,8-diaminopelargonic acid (DAPA, also called 7,8-diammoniononanoate) to form a ureido ring. The sequence is that of ATP-dependent dethiobiotin synthetase BioD from Brucella anthropi (strain ATCC 49188 / DSM 6882 / CCUG 24695 / JCM 21032 / LMG 3331 / NBRC 15819 / NCTC 12168 / Alc 37) (Ochrobactrum anthropi).